A 310-amino-acid polypeptide reads, in one-letter code: Glutamyl-Q tRNA(Asp) synthetase (310 aa).

Residues 24-28 (RFAPS) and Glu60 each bind L-glutamate. The 'HIGH' region signature appears at 27–37 (PSPSGPLHFGS). Zn(2+) contacts are provided by Cys116, Cys118, Tyr130, and Cys134. Tyr187 and Arg205 together coordinate L-glutamate. Residues 243 to 247 (KLSKQ) carry the 'KMSKS' region motif. Lys246 contacts ATP.

The protein belongs to the class-I aminoacyl-tRNA synthetase family. GluQ subfamily. The cofactor is Zn(2+).

Catalyzes the tRNA-independent activation of glutamate in presence of ATP and the subsequent transfer of glutamate onto a tRNA(Asp). Glutamate is transferred on the 2-amino-5-(4,5-dihydroxy-2-cyclopenten-1-yl) moiety of the queuosine in the wobble position of the QUC anticodon. The protein is Glutamyl-Q tRNA(Asp) synthetase of Photobacterium profundum (strain SS9).